Consider the following 196-residue polypeptide: uncharacterized protein (196 aa).

Residues 44 to 46 (TTA), glycine 80, valine 100, and 107 to 109 (PSL) contribute to the S-adenosyl-L-methionine site.

The protein belongs to the class IV-like SAM-binding methyltransferase superfamily. RNA methyltransferase TrmH family.

This is an uncharacterized protein from Serratia marcescens.